The sequence spans 59 residues: Conotoxin mr5a (59 aa).

The first 22 residues, 1 to 22, serve as a signal peptide directing secretion; sequence MRCLPVFVILLLLIASAPSVDA. The propeptide occupies 23–48; the sequence is RPKTKDDMPLASFHDNAKRILQILQD.

In terms of processing, contains 2 disulfide bonds that can be either 'C1-C3, C2-C4' or 'C1-C4, C2-C3', since these disulfide connectivities have been observed for conotoxins with cysteine framework V (for examples, see AC P0DQQ7 and AC P81755). As to expression, expressed by the venom duct.

The protein resides in the secreted. The protein is Conotoxin mr5a of Conus marmoreus (Marble cone).